The primary structure comprises 251 residues: 2,3-bisphosphoglycerate-dependent phosphoglycerate mutase (251 aa).

Substrate-binding positions include 13–20 (RHGESEWN), 26–27 (TG), R65, 92–95 (ERHY), K103, 119–120 (RR), and 186–187 (GN). H14 functions as the Tele-phosphohistidine intermediate in the catalytic mechanism. Catalysis depends on E92, which acts as the Proton donor/acceptor.

The protein belongs to the phosphoglycerate mutase family. BPG-dependent PGAM subfamily.

The catalysed reaction is (2R)-2-phosphoglycerate = (2R)-3-phosphoglycerate. It participates in carbohydrate degradation; glycolysis; pyruvate from D-glyceraldehyde 3-phosphate: step 3/5. Catalyzes the interconversion of 2-phosphoglycerate and 3-phosphoglycerate. This is 2,3-bisphosphoglycerate-dependent phosphoglycerate mutase from Rhodococcus jostii (strain RHA1).